A 489-amino-acid chain; its full sequence is Glutamyl-tRNA(Gln) amidotransferase subunit A (489 aa).

Catalysis depends on charge relay system residues Lys-77 and Ser-152. Ser-176 functions as the Acyl-ester intermediate in the catalytic mechanism.

Belongs to the amidase family. GatA subfamily. Heterotrimer of A, B and C subunits.

The enzyme catalyses L-glutamyl-tRNA(Gln) + L-glutamine + ATP + H2O = L-glutaminyl-tRNA(Gln) + L-glutamate + ADP + phosphate + H(+). Allows the formation of correctly charged Gln-tRNA(Gln) through the transamidation of misacylated Glu-tRNA(Gln) in organisms which lack glutaminyl-tRNA synthetase. The reaction takes place in the presence of glutamine and ATP through an activated gamma-phospho-Glu-tRNA(Gln). The chain is Glutamyl-tRNA(Gln) amidotransferase subunit A from Levilactobacillus brevis (strain ATCC 367 / BCRC 12310 / CIP 105137 / JCM 1170 / LMG 11437 / NCIMB 947 / NCTC 947) (Lactobacillus brevis).